An 882-amino-acid chain; its full sequence is Alanine--tRNA ligase (882 aa).

His-568, His-572, Cys-670, and His-674 together coordinate Zn(2+).

The protein belongs to the class-II aminoacyl-tRNA synthetase family. Requires Zn(2+) as cofactor.

It is found in the cytoplasm. It carries out the reaction tRNA(Ala) + L-alanine + ATP = L-alanyl-tRNA(Ala) + AMP + diphosphate. Catalyzes the attachment of alanine to tRNA(Ala) in a two-step reaction: alanine is first activated by ATP to form Ala-AMP and then transferred to the acceptor end of tRNA(Ala). Also edits incorrectly charged Ser-tRNA(Ala) and Gly-tRNA(Ala) via its editing domain. In Syntrophotalea carbinolica (strain DSM 2380 / NBRC 103641 / GraBd1) (Pelobacter carbinolicus), this protein is Alanine--tRNA ligase.